A 330-amino-acid polypeptide reads, in one-letter code: 4-epi-cubebol synthase ((2E,6E)-farnesyl diphosphate cyclizing) (330 aa).

Mg(2+)-binding residues include D91 and E96. The DDXXXE motif motif lies at 91–96 (DDAFCE). A substrate-binding site is contributed by R184. Residues N230 and S234 each contribute to the Mg(2+) site. K237 is a binding site for substrate. Mg(2+) is bound at residue E238. 316-317 (RY) provides a ligand contact to substrate.

Belongs to the terpene synthase family. It depends on Mg(2+) as a cofactor.

The catalysed reaction is (2E,6E)-farnesyl diphosphate + H2O = 4-epi-cubebol + diphosphate. The protein operates within secondary metabolite biosynthesis; terpenoid biosynthesis. Its function is as follows. Catalyzes the conversion of (2E,6E)-farnesyl diphosphate (FPP) to yield the bicyclic sesquiterpenol 4-epi-cubebol via a 1,10-cyclization, which requires the abstraction of the pyrophosphate from FPP to yield a (E,E)-germacradienyl cation. The only accepted substrate is (2E,6E)-farnesyl diphosphate (FPP). This Streptosporangium roseum (strain ATCC 12428 / DSM 43021 / JCM 3005 / KCTC 9067 / NCIMB 10171 / NRRL 2505 / NI 9100) protein is 4-epi-cubebol synthase ((2E,6E)-farnesyl diphosphate cyclizing).